The sequence spans 218 residues: Thymidylate kinase (218 aa).

15–22 serves as a coordination point for ATP; sequence GLDRSGKS.

The protein belongs to the thymidylate kinase family.

The enzyme catalyses dTMP + ATP = dTDP + ADP. Its pathway is pyrimidine metabolism; dTTP biosynthesis. In terms of biological role, catalyzes the conversion of dTMP to dTDP. The polypeptide is Thymidylate kinase (Caenorhabditis elegans).